The primary structure comprises 276 residues: MFRPQVVGVTGRTDLGRAVRVAERVCRLCDREGFEVLVDDSLGIGEYPRVNLKDMGKEVDMIITIGGDGTILRVSRITSEYEVPILGVNLGKFGFLTEVSESGLKEAVSRLARGDFNLEEHRKLRIKIGGSDEGDALNEVTVITSRPAKMIRYRLSIDGFELETTWADGVLVATPTGSTAYSLSAGGPIVEPQVECSIITPLNPFKLEARPMVVSMDRRVEIDVDDPERAEVVVDGQEYMNLDGTVSVTRSPNVARFIRFGSTYFERLKEKFLRWD.

D68 acts as the Proton acceptor in catalysis. Residues 68–69 (DG), R73, 138–139 (NE), K149, D168, 179–184 (TAYSLS), and Q237 each bind NAD(+).

It belongs to the NAD kinase family. It depends on a divalent metal cation as a cofactor.

The protein localises to the cytoplasm. It catalyses the reaction NAD(+) + ATP = ADP + NADP(+) + H(+). Functionally, involved in the regulation of the intracellular balance of NAD and NADP, and is a key enzyme in the biosynthesis of NADP. Catalyzes specifically the phosphorylation on 2'-hydroxyl of the adenosine moiety of NAD to yield NADP. This chain is NAD kinase, found in Methanopyrus kandleri (strain AV19 / DSM 6324 / JCM 9639 / NBRC 100938).